Consider the following 89-residue polypeptide: Small ribosomal subunit protein uS15 (89 aa).

Residues 1–21 (MSITAERKAEVIKDNARDKGD) show a composition bias toward basic and acidic residues. A disordered region spans residues 1–26 (MSITAERKAEVIKDNARDKGDTGSPE).

Belongs to the universal ribosomal protein uS15 family. As to quaternary structure, part of the 30S ribosomal subunit. Forms a bridge to the 50S subunit in the 70S ribosome, contacting the 23S rRNA.

In terms of biological role, one of the primary rRNA binding proteins, it binds directly to 16S rRNA where it helps nucleate assembly of the platform of the 30S subunit by binding and bridging several RNA helices of the 16S rRNA. Functionally, forms an intersubunit bridge (bridge B4) with the 23S rRNA of the 50S subunit in the ribosome. The chain is Small ribosomal subunit protein uS15 from Sphingopyxis alaskensis (strain DSM 13593 / LMG 18877 / RB2256) (Sphingomonas alaskensis).